A 189-amino-acid chain; its full sequence is Peptidyl-tRNA hydrolase (189 aa).

Tyrosine 15 serves as a coordination point for tRNA. Histidine 20 acts as the Proton acceptor in catalysis. TRNA-binding residues include phenylalanine 66, asparagine 68, and asparagine 114.

Belongs to the PTH family. In terms of assembly, monomer.

It localises to the cytoplasm. The enzyme catalyses an N-acyl-L-alpha-aminoacyl-tRNA + H2O = an N-acyl-L-amino acid + a tRNA + H(+). Hydrolyzes ribosome-free peptidyl-tRNAs (with 1 or more amino acids incorporated), which drop off the ribosome during protein synthesis, or as a result of ribosome stalling. In terms of biological role, catalyzes the release of premature peptidyl moieties from peptidyl-tRNA molecules trapped in stalled 50S ribosomal subunits, and thus maintains levels of free tRNAs and 50S ribosomes. This Streptococcus equi subsp. zooepidemicus (strain MGCS10565) protein is Peptidyl-tRNA hydrolase.